The chain runs to 125 residues: Large ribosomal subunit protein uL22c (125 aa).

This sequence belongs to the universal ribosomal protein uL22 family. As to quaternary structure, part of the 50S ribosomal subunit.

The protein localises to the plastid. It is found in the chloroplast. Functionally, this protein binds specifically to 23S rRNA. In terms of biological role, the globular domain of the protein is located near the polypeptide exit tunnel on the outside of the subunit, while an extended beta-hairpin is found that lines the wall of the exit tunnel in the center of the 70S ribosome. The polypeptide is Large ribosomal subunit protein uL22c (rpl22) (Nuphar advena (Common spatterdock)).